Consider the following 207-residue polypeptide: Uracil phosphoribosyltransferase (207 aa).

Residues arginine 77, arginine 102, and 129 to 137 (DPMLATGGS) each bind 5-phospho-alpha-D-ribose 1-diphosphate. Uracil is bound by residues isoleucine 192 and 197–199 (GDA). Residue aspartate 198 participates in 5-phospho-alpha-D-ribose 1-diphosphate binding.

This sequence belongs to the UPRTase family. The cofactor is Mg(2+).

It catalyses the reaction UMP + diphosphate = 5-phospho-alpha-D-ribose 1-diphosphate + uracil. The protein operates within pyrimidine metabolism; UMP biosynthesis via salvage pathway; UMP from uracil: step 1/1. Allosterically activated by GTP. In terms of biological role, catalyzes the conversion of uracil and 5-phospho-alpha-D-ribose 1-diphosphate (PRPP) to UMP and diphosphate. This Mycoplasma mycoides subsp. mycoides SC (strain CCUG 32753 / NCTC 10114 / PG1) protein is Uracil phosphoribosyltransferase.